The sequence spans 156 residues: Small ribosomal subunit protein uS7 (156 aa).

This sequence belongs to the universal ribosomal protein uS7 family. In terms of assembly, part of the 30S ribosomal subunit. Contacts proteins S9 and S11.

One of the primary rRNA binding proteins, it binds directly to 16S rRNA where it nucleates assembly of the head domain of the 30S subunit. Is located at the subunit interface close to the decoding center, probably blocks exit of the E-site tRNA. The chain is Small ribosomal subunit protein uS7 from Nostoc punctiforme (strain ATCC 29133 / PCC 73102).